A 92-amino-acid polypeptide reads, in one-letter code: Large ribosomal subunit protein bL31 (92 aa).

It belongs to the bacterial ribosomal protein bL31 family. Type A subfamily. Part of the 50S ribosomal subunit.

Binds the 23S rRNA. The polypeptide is Large ribosomal subunit protein bL31 (Mesoplasma florum (strain ATCC 33453 / NBRC 100688 / NCTC 11704 / L1) (Acholeplasma florum)).